Reading from the N-terminus, the 98-residue chain is uncharacterized protein (98 aa).

Positions 1 to 63 are disordered; that stretch reads MPRDKKLVHR…NGHSQPAIVA (63 aa). Over residues 14-29 the composition is skewed to acidic residues; the sequence is DVEDEDNDQREEEWSD. The segment covering 48 to 57 has biased composition (polar residues); that stretch reads EPSSASNGHS.

This is an uncharacterized protein from Aedes vexans (Inland floodwater mosquito).